A 159-amino-acid polypeptide reads, in one-letter code: Phospholipase A2 AP-PLA2-I (159 aa).

Positions 1–19 (MNFLVVIVTTVSLAGAASA) are cleaved as a signal peptide. A propeptide spanning residues 20 to 23 (GEIQ) is cleaved from the precursor. 6 disulfides stabilise this stretch: Cys-51-Cys-159, Cys-53-Cys-69, Cys-68-Cys-139, Cys-75-Cys-132, Cys-85-Cys-125, and Cys-110-Cys-130. Tyr-52, Gly-54, and Gly-56 together coordinate Ca(2+). His-72 is an active-site residue. Asp-73 is a Ca(2+) binding site. The active site involves Asp-133.

Belongs to the phospholipase A2 family. Group I subfamily. Homodimer. Requires Ca(2+) as cofactor. Expressed by the venom gland.

The protein localises to the secreted. The enzyme catalyses a 1,2-diacyl-sn-glycero-3-phosphocholine + H2O = a 1-acyl-sn-glycero-3-phosphocholine + a fatty acid + H(+). Functionally, starfish phospholipase A2 (PLA2) that has hemorrhagic and capillary permeability-increasing activities and hence is considered to be deeply involved in the local inflammation. Shows hemolytic activity only in the presence of phosphatidylcholine (PC). PLA2 catalyzes the calcium-dependent hydrolysis of the 2-acyl groups in 3-sn-phosphoglycerides. The sequence is that of Phospholipase A2 AP-PLA2-I from Acanthaster planci (Crown-of-thorns starfish).